A 580-amino-acid polypeptide reads, in one-letter code: Laccase-20 (580 aa).

The N-terminal stretch at 1 to 23 is a signal peptide; sequence MVASLLCTVAVAVLAVAAVGGEA. Plastocyanin-like domains follow at residues 31–147 and 156–310; these read VVHE…PRDG and KDVP…YTGV. Asn36 and Asn42 each carry an N-linked (GlcNAc...) asparagine glycan. The Cu cation site is built by His81 and His83. Residue Asn115 is glycosylated (N-linked (GlcNAc...) asparagine). Residues His126 and His128 each contribute to the Cu cation site. 7 N-linked (GlcNAc...) asparagine glycosylation sites follow: Asn200, Asn339, Asn373, Asn392, Asn399, Asn429, and Asn460. The Plastocyanin-like 3 domain occupies 419–561; sequence DFPVRPPRPY…ATAFIVEDGP (143 aa). Residues Asn478, His481, His483, His540, Cys541, His542, His546, and Met551 each contribute to the Cu cation site. Residues 560–580 form a disordered region; the sequence is GPTPETSLPPPPPEFKRCDAS.

This sequence belongs to the multicopper oxidase family. Requires Cu cation as cofactor.

It is found in the secreted. The protein resides in the extracellular space. The protein localises to the apoplast. It carries out the reaction 4 hydroquinone + O2 = 4 benzosemiquinone + 2 H2O. Its function is as follows. Lignin degradation and detoxification of lignin-derived products. The polypeptide is Laccase-20 (LAC20) (Oryza sativa subsp. japonica (Rice)).